Consider the following 275-residue polypeptide: Vitamin B12-binding protein (275 aa).

The signal sequence occupies residues 1-27 (MKWIKSTGSIGLSLLLFLSSFSHSLYA). Residues 31 to 275 (RVISLSPSTT…LCQQLNDNGS (245 aa)) form the Fe/B12 periplasmic-binding domain. Cyanocob(III)alamin is bound at residue Tyr-58. Cys-191 and Cys-267 are disulfide-bonded.

This sequence belongs to the BtuF family. As to quaternary structure, the complex is composed of two ATP-binding proteins (BtuD), two transmembrane proteins (BtuC) and a solute-binding protein (BtuF).

The protein resides in the periplasm. Its function is as follows. Part of the ABC transporter complex BtuCDF involved in vitamin B12 import. Binds vitamin B12 and delivers it to the periplasmic surface of BtuC. The chain is Vitamin B12-binding protein from Photorhabdus laumondii subsp. laumondii (strain DSM 15139 / CIP 105565 / TT01) (Photorhabdus luminescens subsp. laumondii).